The primary structure comprises 1292 residues: Calcium-transporting ATPase 2 (1292 aa).

The interval Met1–Ser105 is disordered. The Cytoplasmic portion of the chain corresponds to Met1–Lys236. The segment covering Lys23–Glu41 has biased composition (polar residues). Positions Ser44–Thr60 are enriched in low complexity. Residues Asp68–Lys78 are compositionally biased toward basic and acidic residues. Residues Val237–Phe257 traverse the membrane as a helical segment. Residues Gly258 to Arg273 lie on the Vacuolar side of the membrane. Residues Val274–Gly294 form a helical membrane-spanning segment. The Cytoplasmic segment spans residues Val295 to Ala448. The helical transmembrane segment at Ile449–Leu469 threads the bilayer. The Vacuolar portion of the chain corresponds to Val470–Gln488. The chain crosses the membrane as a helical span at residues Ile489–Val509. Ca(2+)-binding residues include Val498 and Glu503. Topologically, residues Thr510 to Lys938 are cytoplasmic. Residue Asp545 is the 4-aspartylphosphate intermediate of the active site. Mg(2+) is bound by residues Asp545 and Thr547. ATP is bound by residues Thr547, Glu638, Lys691, Arg736, Thr807–Asp809, Arg856, and Lys862. Asp881 lines the Mg(2+) pocket. Asn884 is an ATP binding site. The helical transmembrane segment at Phe939 to Val959 threads the bilayer. Residue Asn947 participates in Ca(2+) binding. The Vacuolar portion of the chain corresponds to Ala960–Ser966. Residues Val967–Ala987 traverse the membrane as a helical segment. Residues Asn977 and Asp981 each coordinate Ca(2+). Residues Leu988–Lys1016 lie on the Cytoplasmic side of the membrane. The helical transmembrane segment at Met1017–Asn1037 threads the bilayer. Residues Ser1038–Asn1084 lie on the Vacuolar side of the membrane. A helical membrane pass occupies residues Phe1085 to Gly1105. The Cytoplasmic segment spans residues Gly1106–Asp1115. The chain crosses the membrane as a helical span at residues Gly1116–Ile1136. The Vacuolar portion of the chain corresponds to Arg1137 to His1292.

It belongs to the cation transport ATPase (P-type) (TC 3.A.3) family.

The protein localises to the vacuole membrane. It carries out the reaction Ca(2+)(in) + ATP + H2O = Ca(2+)(out) + ADP + phosphate + H(+). In terms of biological role, this magnesium-dependent enzyme catalyzes the hydrolysis of ATP coupled with the transport of calcium. Transports the calcium to the vacuole and participates in the control of the cytosolic free calcium. The polypeptide is Calcium-transporting ATPase 2 (pmc1) (Schizosaccharomyces pombe (strain 972 / ATCC 24843) (Fission yeast)).